A 722-amino-acid polypeptide reads, in one-letter code: Solute carrier organic anion transporter family member 4A1 (722 aa).

The interval 1–52 (MPLHQLGDKPLTFPSPNSAMENGLDHTPPSRRASPGTPLSPGSLRSAAHSPL) is disordered. The Cytoplasmic segment spans residues 1-103 (MPLHQLGDKP…PCLQVLNTPK (103 aa)). S34 bears the Phosphoserine mark. Residue T37 is modified to Phosphothreonine. A phosphoserine mark is found at S40, S43, S46, and S50. Residues 104 to 124 (GILFFLCAAAFLQGMTVNGFI) form a helical membrane-spanning segment. At 125–143 (NTVITSLERRYDLHSYQSG) the chain is on the extracellular side. A helical membrane pass occupies residues 144 to 164 (LIASSYDIAACLCLTFVSYFG). Topologically, residues 165–170 (GSGHKP) are cytoplasmic. A helical transmembrane segment spans residues 171–195 (RWLGWGVLLMGTGSLVFALPHFTAG). Residues 196 to 222 (RYEVELDAGVRTCPANPGAVCADSTSG) lie on the Extracellular side of the membrane. The chain crosses the membrane as a helical span at residues 223–253 (LSRYQLVFMLGQFLHGVGATPLYTLGVTYLD). The Cytoplasmic portion of the chain corresponds to 254–272 (ENVKSSCSPVYIAIFYTAA). Residues 273–293 (ILGPAAGYLIGGALLNIYTEM) traverse the membrane as a helical segment. At 294–307 (GRRTELTTESPLWV) the chain is on the extracellular side. A helical membrane pass occupies residues 308 to 332 (GAWWVGFLGSGAAAFFTAVPILGYP). Over 333 to 378 (RQLPGSQRYAVMRAAEMHQLKDSSRGEASNPDFGKTIRDLPLSIWL) the chain is Cytoplasmic. A helical membrane pass occupies residues 379–400 (LLKNPTFILLCLAGATEATLIT). The Extracellular segment spans residues 401-420 (GMSTFSPKFLESQFSLSASE). A helical transmembrane segment spans residues 421–444 (AATLFGYLVVPAGGGGTFLGGFFV). Residues 445-448 (NKLR) lie on the Cytoplasmic side of the membrane. The helical transmembrane segment at 449–471 (LRGSAVIKFCLFCTVVSLLGILV) threads the bilayer. At 472–580 (FSLHCPSVPM…TSTCQRKPLL (109 aa)) the chain is on the extracellular side. The region spanning 498–555 (LNLTAPCNAACSCQPEHYSPVCGSDGLMYFSLCHAGCPAATETNVDGQKVYRDCSCIP) is the Kazal-like domain. The N-linked (GlcNAc...) asparagine glycan is linked to N499. 3 cysteine pairs are disulfide-bonded: C504–C534, C510–C530, and C519–C553. N-linked (GlcNAc...) asparagine glycosylation occurs at N557. The chain crosses the membrane as a helical span at residues 581 to 603 (LVFIFVVIFFTFLSSIPALTATL). At 604–612 (RCVRDPQRS) the chain is on the cytoplasmic side. A helical transmembrane segment spans residues 613 to 638 (FALGIQWIVVRILGGIPGPIAFGWVI). Over 639–671 (DKACLLWQDQCGQQGSCLVYQNSAMSRYILIMG) the chain is Extracellular. Residues 672–689 (LLYKVLGVLFFAIACFLY) traverse the membrane as a helical segment. The Cytoplasmic portion of the chain corresponds to 690 to 722 (KPLSESSDGLETCLPSQSSAPDSATDSQLQSSV). The segment at 703–722 (LPSQSSAPDSATDSQLQSSV) is disordered.

Belongs to the organo anion transporter (TC 2.A.60) family. Widely expressed. Expressed in placental trophoblasts. Expressed in pancreas, kidney, skeletal muscle, liver, lung, brain, heart, colon, small intestine, ovary, testis, prostate, thymus and spleen. In testis, primarily localized to Leydig cells.

The protein resides in the cell membrane. The catalysed reaction is 3,3',5-triiodo-L-thyronine(out) + L-glutamate(in) = 3,3',5-triiodo-L-thyronine(in) + L-glutamate(out). It catalyses the reaction L-thyroxine(out) + L-glutamate(in) = L-thyroxine(in) + L-glutamate(out). It carries out the reaction estrone 3-sulfate(out) + L-glutamate(in) = estrone 3-sulfate(in) + L-glutamate(out). The enzyme catalyses taurocholate(out) + L-glutamate(in) = taurocholate(in) + L-glutamate(out). The catalysed reaction is 3,3',5-triiodo-L-thyronine(out) = 3,3',5-triiodo-L-thyronine(in). It catalyses the reaction L-thyroxine(out) = L-thyroxine(in). It carries out the reaction 3,3',5'-triiodo-L-thyronine(out) = 3,3',5'-triiodo-L-thyronine(in). The enzyme catalyses estrone 3-sulfate(out) = estrone 3-sulfate(in). The catalysed reaction is 17beta-estradiol 17-O-(beta-D-glucuronate)(out) = 17beta-estradiol 17-O-(beta-D-glucuronate)(in). It catalyses the reaction taurocholate(out) = taurocholate(in). It carries out the reaction prostaglandin E2(out) = prostaglandin E2(in). In terms of biological role, organic anion antiporter with apparent broad substrate specificity. Recognizes various substrates including thyroid hormones 3,3',5-triiodo-L-thyronine (T3), L-thyroxine (T4) and 3,3',5'-triiodo-L-thyronine (rT3), conjugated steroids such as estrone 3-sulfate and estradiol 17-beta glucuronide, bile acids such as taurocholate and prostanoids such as prostaglandin E2, likely operating in a tissue-specific manner. May be involved in uptake of metabolites from the circulation into organs such as kidney, liver or placenta. Possibly drives the selective transport of thyroid hormones and estrogens coupled to an outward glutamate gradient across the microvillous membrane of the placenta. The transport mechanism, its electrogenicity and potential tissue-specific counterions remain to be elucidated. The sequence is that of Solute carrier organic anion transporter family member 4A1 (SLCO4A1) from Homo sapiens (Human).